The sequence spans 116 residues: MVSKQPRKQRKARYNAPLHVRQKFMGARLSEALSKEYGTRSAAVIAGDTVKVMRGDYKGTEGKVQAVSLQDGTISVDGVISTKVDGTEVPRPIYPSNVMITKLELKDERRASSIKK.

Belongs to the universal ribosomal protein uL24 family. Part of the 50S ribosomal subunit.

In terms of biological role, one of two assembly initiator proteins, it binds directly to the 5'-end of the 23S rRNA, where it nucleates assembly of the 50S subunit. Functionally, located at the polypeptide exit tunnel on the outside of the subunit. In Methanosarcina barkeri (strain Fusaro / DSM 804), this protein is Large ribosomal subunit protein uL24.